Consider the following 196-residue polypeptide: Imidazoleglycerol-phosphate dehydratase (196 aa).

This sequence belongs to the imidazoleglycerol-phosphate dehydratase family.

It is found in the cytoplasm. The catalysed reaction is D-erythro-1-(imidazol-4-yl)glycerol 3-phosphate = 3-(imidazol-4-yl)-2-oxopropyl phosphate + H2O. The protein operates within amino-acid biosynthesis; L-histidine biosynthesis; L-histidine from 5-phospho-alpha-D-ribose 1-diphosphate: step 6/9. This chain is Imidazoleglycerol-phosphate dehydratase, found in Caulobacter vibrioides (strain ATCC 19089 / CIP 103742 / CB 15) (Caulobacter crescentus).